The primary structure comprises 204 residues: uncharacterized protein (204 aa).

The interval 47–108 (TDSSDDEGGA…EDSDEEGEGG (62 aa)) is disordered. The segment covering 49-106 (SSDDEGGASSGDEGEASSDDEGDASSDDEEEASSDGEGVVEDEETLDAEGEDSDEEGE) has biased composition (acidic residues).

It is found in the mitochondrion. This is an uncharacterized protein from Paramecium tetraurelia.